A 222-amino-acid polypeptide reads, in one-letter code: Putative serine proteinase inhibitor 2 homolog second part (222 aa).

It belongs to the serpin family. Poxviruses subfamily.

The protein is Putative serine proteinase inhibitor 2 homolog second part of Homo sapiens (Human).